The following is a 254-amino-acid chain: DNA repair protein RecO (254 aa).

It belongs to the RecO family.

Its function is as follows. Involved in DNA repair and RecF pathway recombination. The protein is DNA repair protein RecO of Anaeromyxobacter dehalogenans (strain 2CP-1 / ATCC BAA-258).